The sequence spans 450 residues: Vacuolar cation/proton exchanger 1c (450 aa).

At 1–73 (MAPPESSHHH…LLGGPAAQLQ (73 aa)) the chain is on the cytoplasmic side. The segment at 28-52 (AAEEEEKKEAAAWTPSSSSSMTGRK) is disordered. The chain crosses the membrane as a helical span at residues 74–94 (EVLLGTKLYPLFSAVPLAVAA). Topologically, residues 95 to 101 (ESLRLGR) are extracellular. A helical membrane pass occupies residues 102 to 122 (VWVFAFSLIGLAPLAERVSFL). The Cytoplasmic segment spans residues 123–134 (SEHIANTVGPTA). The chain crosses the membrane as a helical span at residues 135–155 (GGIMNATCGNVPELIIALFAL). A cation selection region spans residues 143–178 (GNVPELIIALFALHKNKMEILKWSLLGSILSNLLLV). The Extracellular portion of the chain corresponds to 156 to 170 (HKNKMEILKWSLLGS). A helical transmembrane segment spans residues 171–191 (ILSNLLLVLGSSLLFGGIVNI). Residues 192 to 201 (GKERPLDKRQ) lie on the Cytoplasmic side of the membrane. The helical transmembrane segment at 202–222 (ADVSIGLLLLGVLCHIATLVS) threads the bilayer. The Extracellular portion of the chain corresponds to 223–239 (KYTSSTGDSINSSSVMQ). Residues 240–260 (LSRSCAIVMLIAYFGSLMFQL) form a helical membrane-spanning segment. The Cytoplasmic portion of the chain corresponds to 261–287 (KTHRQIFELEEDSSDSSSSEDDATDKS). A helical membrane pass occupies residues 288–308 (VIGFASAMVWLIGMAVVTAML). Residues 309 to 331 (SSYVVTTIEEASESMGIPVRFIS) are Extracellular-facing. The helical transmembrane segment at 332-352 (IILLPIVGNAAEHAGAIIFAF) threads the bilayer. The cation selection stretch occupies residues 339-374 (GNAAEHAGAIIFAFKNKIDISLGITLGSATQISMLV). Over 353 to 360 (KNKIDISL) the chain is Cytoplasmic. A helical transmembrane segment spans residues 361–381 (GITLGSATQISMLVVPVILIV). At 382–385 (SWVN) the chain is on the extracellular side. Residues 386 to 406 (AIPMDLDFNLLETGSLAMAVI) traverse the membrane as a helical segment. The Cytoplasmic portion of the chain corresponds to 407–424 (TTAFTLQDDKWHYLKGLN). The helical transmembrane segment at 425 to 445 (LVFSYIVIAVCFFVMKALPTL) threads the bilayer. The Extracellular segment spans residues 446-450 (KKEDD).

The protein belongs to the Ca(2+):cation antiporter (CaCA) (TC 2.A.19) family. Cation/proton exchanger (CAX) subfamily. Expressed in leaf blades.

The protein localises to the vacuole membrane. Its function is as follows. Vacuolar cation/proton exchanger (CAX). Translocates Ca(2+) and other metal ions into vacuoles using the proton gradient formed by H(+)-ATPase and H(+)-pyrophosphatase. This is Vacuolar cation/proton exchanger 1c (CAX1c) from Oryza sativa subsp. japonica (Rice).